Consider the following 157-residue polypeptide: Crossover junction endodeoxyribonuclease RuvC (157 aa).

Catalysis depends on residues Asp-7, Glu-66, and Asp-139. Mg(2+)-binding residues include Asp-7, Glu-66, and Asp-139.

The protein belongs to the RuvC family. Homodimer which binds Holliday junction (HJ) DNA. The HJ becomes 2-fold symmetrical on binding to RuvC with unstacked arms; it has a different conformation from HJ DNA in complex with RuvA. In the full resolvosome a probable DNA-RuvA(4)-RuvB(12)-RuvC(2) complex forms which resolves the HJ. The cofactor is Mg(2+).

The protein localises to the cytoplasm. It carries out the reaction Endonucleolytic cleavage at a junction such as a reciprocal single-stranded crossover between two homologous DNA duplexes (Holliday junction).. Functionally, the RuvA-RuvB-RuvC complex processes Holliday junction (HJ) DNA during genetic recombination and DNA repair. Endonuclease that resolves HJ intermediates. Cleaves cruciform DNA by making single-stranded nicks across the HJ at symmetrical positions within the homologous arms, yielding a 5'-phosphate and a 3'-hydroxyl group; requires a central core of homology in the junction. The consensus cleavage sequence is 5'-(A/T)TT(C/G)-3'. Cleavage occurs on the 3'-side of the TT dinucleotide at the point of strand exchange. HJ branch migration catalyzed by RuvA-RuvB allows RuvC to scan DNA until it finds its consensus sequence, where it cleaves and resolves the cruciform DNA. The protein is Crossover junction endodeoxyribonuclease RuvC of Helicobacter pylori (strain ATCC 700392 / 26695) (Campylobacter pylori).